We begin with the raw amino-acid sequence, 316 residues long: Ribosomal RNA small subunit methyltransferase H (316 aa).

S-adenosyl-L-methionine is bound by residues 35–37 (SGH), D55, F84, D105, and Q112.

Belongs to the methyltransferase superfamily. RsmH family.

Its subcellular location is the cytoplasm. It catalyses the reaction cytidine(1402) in 16S rRNA + S-adenosyl-L-methionine = N(4)-methylcytidine(1402) in 16S rRNA + S-adenosyl-L-homocysteine + H(+). Specifically methylates the N4 position of cytidine in position 1402 (C1402) of 16S rRNA. The polypeptide is Ribosomal RNA small subunit methyltransferase H (Streptococcus equi subsp. zooepidemicus (strain H70)).